A 411-amino-acid chain; its full sequence is Serine--tRNA ligase (411 aa).

226 to 228 is an L-serine binding site; that stretch reads TSE. 257-259 contributes to the ATP binding site; sequence RQE. E280 lines the L-serine pocket. 344-347 provides a ligand contact to ATP; sequence EISS. S379 provides a ligand contact to L-serine.

The protein belongs to the class-II aminoacyl-tRNA synthetase family. Type-1 seryl-tRNA synthetase subfamily. In terms of assembly, homodimer. The tRNA molecule binds across the dimer.

It is found in the cytoplasm. It catalyses the reaction tRNA(Ser) + L-serine + ATP = L-seryl-tRNA(Ser) + AMP + diphosphate + H(+). The enzyme catalyses tRNA(Sec) + L-serine + ATP = L-seryl-tRNA(Sec) + AMP + diphosphate + H(+). Its pathway is aminoacyl-tRNA biosynthesis; selenocysteinyl-tRNA(Sec) biosynthesis; L-seryl-tRNA(Sec) from L-serine and tRNA(Sec): step 1/1. In terms of biological role, catalyzes the attachment of serine to tRNA(Ser). Is also able to aminoacylate tRNA(Sec) with serine, to form the misacylated tRNA L-seryl-tRNA(Sec), which will be further converted into selenocysteinyl-tRNA(Sec). In Campylobacter lari (strain RM2100 / D67 / ATCC BAA-1060), this protein is Serine--tRNA ligase.